A 595-amino-acid chain; its full sequence is Phytoene desaturase (595 aa).

A signal peptide spans 1 to 23 (MAETQRPRSAIIVGAGAGGIAVA). The chain crosses the membrane as a helical span at residues 574 to 594 (SQRAFPLLVALMGVLYFLLFV).

The protein belongs to the carotenoid/retinoid oxidoreductase family. It depends on NAD(+) as a cofactor.

It localises to the membrane. The enzyme catalyses 15-cis-phytoene + A = all-trans-phytofluene + AH2. It catalyses the reaction all-trans-phytofluene + A = all-trans-zeta-carotene + AH2. The catalysed reaction is all-trans-zeta-carotene + A = all-trans-neurosporene + AH2. It carries out the reaction all-trans-neurosporene + A = all-trans-lycopene + AH2. The enzyme catalyses all-trans-lycopene + A = all-trans-3,4-didehydrolycopene + AH2. The protein operates within carotenoid biosynthesis; lycopene biosynthesis. Functionally, phytoene desaturase involved in the carotenoid biosynthesis pathway. Converts phytoene into 3,4-didehydrolycopene via the intermediates phytofluene, zeta-carotene, neurosporene and lycopene, by introducing up to five double bonds into phytoene. Is also able to desaturate 1-hydroxyneurosporene into 1-hydroxylycopene and 1-hydroxylycopene into 1-hydroxy-3,4-didehydrolycopene. Gamma-carotene and 1,19-dihydroxylycopene are not accepted as substrates. Neurosporaxanthin is synthesized from geranyl-geranyl pyrophosphate (GGPP) through several enzymatic activities. Phytoene synthase activity performed by the bifunctional enzyme al-2 first produces phytoene from geranyl-geranyl pyrophosphate (GGPP). The phytoene dehydrogenase al-1 then introduces 5 desaturations to lead to 3,4-didehydrolycopene via the intermediates phytofluene, zeta-carotene, neurosporene and lycopene. Al-2 cyclase activity then converts 3,4-didehydrolycopene into torulene. Al-2 can also convet lycopene into gamma-carotene which in turn is converted to beta-carotene by an additional al-2 cyclization reaction. Torulene is the substrate of the dioxidase cao-2 that breaks the molecule, removing five carbon atoms to yield beta-apo-4'-carotenal, whereas the aldehyde dehydrogenase ylo-1 mediates the last step by converting beta-apo-4'-carotenal into neurosporaxanthin. In Neurospora crassa (strain ATCC 24698 / 74-OR23-1A / CBS 708.71 / DSM 1257 / FGSC 987), this protein is Phytoene desaturase.